The chain runs to 151 residues: Deoxyuridine 5'-triphosphate nucleotidohydrolase (151 aa).

Substrate contacts are provided by residues 70-72 (RSG), Asn83, 87-89 (LID), and Met97.

It belongs to the dUTPase family. Mg(2+) serves as cofactor.

It carries out the reaction dUTP + H2O = dUMP + diphosphate + H(+). Its pathway is pyrimidine metabolism; dUMP biosynthesis; dUMP from dCTP (dUTP route): step 2/2. Its function is as follows. This enzyme is involved in nucleotide metabolism: it produces dUMP, the immediate precursor of thymidine nucleotides and it decreases the intracellular concentration of dUTP so that uracil cannot be incorporated into DNA. This Psychromonas ingrahamii (strain DSM 17664 / CCUG 51855 / 37) protein is Deoxyuridine 5'-triphosphate nucleotidohydrolase.